Reading from the N-terminus, the 753-residue chain is Bifunctional terpene synthase FUP1 (753 aa).

The interval 1–329 (MGPLLYRSRH…CSACPRQNAW (329 aa)) is terpene cyclase. Mg(2+) is bound at residue Asp-96. The DDXXD 1 motif lies at 96–100 (DDTGE). Residues 231 to 239 (NDYFSWERE) carry the NSE/DTE motif. The tract at residues 330-745 (KNDTLSNGQN…MLRLCLAKLS (416 aa)) is prenyltransferase. Isopentenyl diphosphate is bound by residues Lys-461, Arg-464, and His-493. Residues Asp-500 and Asp-504 each coordinate Mg(2+). Positions 500 to 504 (DDLED) match the DDXXD 2 motif. A dimethylallyl diphosphate-binding site is contributed by Arg-509. Isopentenyl diphosphate is bound at residue Arg-510. The dimethylallyl diphosphate site is built by Lys-587, Thr-588, Gln-625, Asn-632, Lys-640, and Lys-650.

The protein in the N-terminal section; belongs to the terpene synthase family. This sequence in the C-terminal section; belongs to the FPP/GGPP synthase family. In terms of assembly, hexamer. Mg(2+) is required as a cofactor.

The catalysed reaction is isopentenyl diphosphate + (2E,6E)-farnesyl diphosphate = (2E,6E,10E)-geranylgeranyl diphosphate + diphosphate. It participates in secondary metabolite biosynthesis; terpenoid biosynthesis. Bifunctional terpene synthase; part of the gene cluster that mediates the biosynthesis of the mycotoxin fusaproliferin (FUP) that belongs to the class of bicyclic sesterterpenoids. The FUP biosynthetic pathway starts with the enzyme encoded by FUP1 that combines a C-terminal prenyltransferase domain responsible for the synthesis of geranylgeranyl diphosphate with the N-terminal terpene cyclase domain, to yield preterpestacin I. Preterpestacin I is then decorated by oxygenation steps that are catalyzed by two cytochrome P450 monooxygenases. First, FUP2 introduces a hydroxyl group at the C-24 position resulting in the formation of preterpestacin IIa, which can be further oxidized. The second P450 monooxygenase catalyzes the hydroxylation at C-16 and C-17 of preterpestacin IIa, producing preterpestacin III. Subsequently, the FAD-dependent oxidoreductase FUP4 catalyzes the oxidation of the hydroxy group at the C-16 position to a keto group, leading to the formation of (-)-terpestacin, which is the immediate precursor of FUP. The final step in the proposed biosynthetic pathway is the addition of an acetyl group at the C-24 position of terpestacin, which is catalyzed by the acetyltransferase FUP5. This Fusarium proliferatum (strain ET1) (Orchid endophyte fungus) protein is Bifunctional terpene synthase FUP1.